Reading from the N-terminus, the 297-residue chain is Ribosomal RNA small subunit methyltransferase H (297 aa).

S-adenosyl-L-methionine-binding positions include 35-37 (GGH), aspartate 55, phenylalanine 82, aspartate 100, and glutamine 107.

Belongs to the methyltransferase superfamily. RsmH family.

It is found in the cytoplasm. It carries out the reaction cytidine(1402) in 16S rRNA + S-adenosyl-L-methionine = N(4)-methylcytidine(1402) in 16S rRNA + S-adenosyl-L-homocysteine + H(+). Functionally, specifically methylates the N4 position of cytidine in position 1402 (C1402) of 16S rRNA. This Chlamydia caviae (strain ATCC VR-813 / DSM 19441 / 03DC25 / GPIC) (Chlamydophila caviae) protein is Ribosomal RNA small subunit methyltransferase H.